A 156-amino-acid polypeptide reads, in one-letter code: Ribosomal RNA large subunit methyltransferase H (156 aa).

S-adenosyl-L-methionine is bound by residues Leu-73, Gly-104, and Leu-123–Leu-128.

Belongs to the RNA methyltransferase RlmH family. In terms of assembly, homodimer.

Its subcellular location is the cytoplasm. It catalyses the reaction pseudouridine(1915) in 23S rRNA + S-adenosyl-L-methionine = N(3)-methylpseudouridine(1915) in 23S rRNA + S-adenosyl-L-homocysteine + H(+). Functionally, specifically methylates the pseudouridine at position 1915 (m3Psi1915) in 23S rRNA. The polypeptide is Ribosomal RNA large subunit methyltransferase H (Shewanella piezotolerans (strain WP3 / JCM 13877)).